The primary structure comprises 421 residues: Gamma-glutamyl phosphate reductase (421 aa).

Belongs to the gamma-glutamyl phosphate reductase family.

It localises to the cytoplasm. The enzyme catalyses L-glutamate 5-semialdehyde + phosphate + NADP(+) = L-glutamyl 5-phosphate + NADPH + H(+). It participates in amino-acid biosynthesis; L-proline biosynthesis; L-glutamate 5-semialdehyde from L-glutamate: step 2/2. Catalyzes the NADPH-dependent reduction of L-glutamate 5-phosphate into L-glutamate 5-semialdehyde and phosphate. The product spontaneously undergoes cyclization to form 1-pyrroline-5-carboxylate. This chain is Gamma-glutamyl phosphate reductase, found in Erythrobacter litoralis (strain HTCC2594).